The primary structure comprises 277 residues: Undecaprenyl-diphosphatase (277 aa).

Transmembrane regions (helical) follow at residues 83–103, 109–129, 188–208, 218–238, and 256–276; these read FALNIIIAFLPAALLGLVFAS, LFAPVPVAIAFIVGGFIILWI, ATEFSFFLAIPTLMGATVYSV, ADIPLFGLGGFAAFVSAFLCV, and YRIVFGLFVLLSAYYGWVVWA.

Belongs to the UppP family.

The protein localises to the cell inner membrane. The catalysed reaction is di-trans,octa-cis-undecaprenyl diphosphate + H2O = di-trans,octa-cis-undecaprenyl phosphate + phosphate + H(+). Catalyzes the dephosphorylation of undecaprenyl diphosphate (UPP). Confers resistance to bacitracin. The sequence is that of Undecaprenyl-diphosphatase from Janthinobacterium sp. (strain Marseille) (Minibacterium massiliensis).